The chain runs to 222 residues: UPF0758 protein YPN_3801 (222 aa).

Residues 100-222 (VLLNPGITQK…CVSFAERGWL (123 aa)) enclose the MPN domain. 3 residues coordinate Zn(2+): histidine 171, histidine 173, and aspartate 184. The JAMM motif signature appears at 171–184 (HNHPSGKAEPSQAD).

Belongs to the UPF0758 family. YicR subfamily.

The protein is UPF0758 protein YPN_3801 of Yersinia pestis bv. Antiqua (strain Nepal516).